Reading from the N-terminus, the 88-residue chain is Large ribosomal subunit protein bL31B (88 aa).

Belongs to the bacterial ribosomal protein bL31 family. Type B subfamily. Part of the 50S ribosomal subunit.

This Corynebacterium efficiens (strain DSM 44549 / YS-314 / AJ 12310 / JCM 11189 / NBRC 100395) protein is Large ribosomal subunit protein bL31B.